A 705-amino-acid polypeptide reads, in one-letter code: Variediene synthase (705 aa).

Positions 9-331 are terpene cyclase; sequence LNSTLSSVVE…RCPRYHPWLC (323 aa). Residue Asp100 coordinates Mg(2+). Residues Asp100, 186-189, Asn230, 234-238, and 325-326 each bind substrate; these read RIID, SFDIE, and RY. Positions 100–104 match the DDXXD 1 motif; sequence DNVVE. Positions 230 to 238 match the NSE/DTE motif; the sequence is NDYFSFDIE. The interval 332-705 is prenyltransferase; sequence KEAASLLHQD…VRLLIHRLKV (374 aa). Basic and acidic residues predominate over residues 349–366; that stretch reads GRKPQALEEYRSRSHSES. The interval 349 to 374 is disordered; it reads GRKPQALEEYRSRSHSESDLSDASPT. Residues Lys424, Arg427, and His456 each contribute to the isopentenyl diphosphate site. Mg(2+) contacts are provided by Asp463 and Asp467. The short motif at 463 to 467 is the DDXXD 2 element; it reads DDIED. Arg472 lines the dimethylallyl diphosphate pocket. An isopentenyl diphosphate-binding site is contributed by Arg473. Residues Lys550, Thr551, Gln589, Asn596, Lys605, and Lys615 each contribute to the dimethylallyl diphosphate site.

In the N-terminal section; belongs to the terpene synthase family. The protein in the C-terminal section; belongs to the FPP/GGPP synthase family. As to quaternary structure, hexamer. Mg(2+) serves as cofactor.

It carries out the reaction isopentenyl diphosphate + (2E,6E)-farnesyl diphosphate = (2E,6E,10E)-geranylgeranyl diphosphate + diphosphate. The catalysed reaction is isopentenyl diphosphate + (2E,6E,10E)-geranylgeranyl diphosphate = (2E,6E,10E,14E)-geranylfarnesyl diphosphate + diphosphate. The enzyme catalyses (2E,6E,10E)-geranylgeranyl diphosphate = variediene + diphosphate. It catalyses the reaction (2E,6E,10E,14E)-geranylfarnesyl diphosphate = (R,2E)-alpha-cericerene + diphosphate. It participates in secondary metabolite biosynthesis; terpenoid biosynthesis. Its function is as follows. Bifunctional terpene synthase that converts dimethylallyl diphosphate (DMAPP) and isopentenyl diphosphate (IPP) into variediene as a single product. The C-terminal prenyltransferase (PT) domain of EvVS catalyzes formation of geranylgeranyl pyrophosphate (GGPP), whereas the N-terminal terpene cyclase (TC) domain catalyzes the cyclization of GGPP to variediene. The PT domain can also synthesize geranylfarnesyl pyrophosphate (GFPP) from the C5 isoprene units in vitro, while the TC domain is able to cyclize GFPP to the sesterterpene (2E)-alpha-cericerene. This is Variediene synthase from Emericella variicolor (Aspergillus stellatus).